The chain runs to 805 residues: Kinesin-like protein KIP3 (805 aa).

One can recognise a Kinesin motor domain in the interval 10–438 (SIVVAIRVRP…LKYANRAKEI (429 aa)). 192–199 (GATGCGKT) is a binding site for ATP. The stretch at 449 to 481 (LSRHVGSYLKMITEQKRQIEELREREEKMISLK) forms a coiled coil. The segment at 720 to 805 (NFSQKKVKWT…HQSLLATARK (86 aa)) is disordered. Positions 764–773 (MQDTTFNEQG) are enriched in polar residues. Low complexity predominate over residues 774–783 (PSTPSAPTTA). Polar residues predominate over residues 792-805 (SLLTHQSLLATARK).

It belongs to the TRAFAC class myosin-kinesin ATPase superfamily. Kinesin family. Kinesin II subfamily.

It localises to the cytoplasm. It is found in the cytoskeleton. The chain is Kinesin-like protein KIP3 (KIP3) from Saccharomyces cerevisiae (strain ATCC 204508 / S288c) (Baker's yeast).